Here is a 28-residue protein sequence, read N- to C-terminus: U-actitoxin-Ate1 (28 aa).

A signal peptide spans 1–15 (MSLILIFFAFTVLKS). C20 and C26 form a disulfide bridge.

In terms of assembly, monomer in solution. May be N-glycosylated at Asn-22. Activity with this modification has not be tested. Highly expressed in the tentacles. Weakly expressed in acrorhagi and mesenteric filaments.

It localises to the secreted. Its subcellular location is the nematocyst. Functionally, probable toxin expected to be employed in prey capture and/or defense against predators (based on its abundance in tentacles). Has only a weak affinity for lipid membranes. Shows moderate cytotoxic activity against breast cancer cell lines (MCF-7 and MDA-MB-231). This chain is U-actitoxin-Ate1, found in Actinia tenebrosa (Australian red waratah sea anemone).